Here is a 121-residue protein sequence, read N- to C-terminus: Large ribosomal subunit protein uL22 (121 aa).

Belongs to the universal ribosomal protein uL22 family. Part of the 50S ribosomal subunit.

Functionally, this protein binds specifically to 23S rRNA; its binding is stimulated by other ribosomal proteins, e.g. L4, L17, and L20. It is important during the early stages of 50S assembly. It makes multiple contacts with different domains of the 23S rRNA in the assembled 50S subunit and ribosome. Its function is as follows. The globular domain of the protein is located near the polypeptide exit tunnel on the outside of the subunit, while an extended beta-hairpin is found that lines the wall of the exit tunnel in the center of the 70S ribosome. This Synechocystis sp. (strain ATCC 27184 / PCC 6803 / Kazusa) protein is Large ribosomal subunit protein uL22.